The primary structure comprises 418 residues: Gamma-glutamyl phosphate reductase (418 aa).

The protein belongs to the gamma-glutamyl phosphate reductase family.

The protein localises to the cytoplasm. The enzyme catalyses L-glutamate 5-semialdehyde + phosphate + NADP(+) = L-glutamyl 5-phosphate + NADPH + H(+). Its pathway is amino-acid biosynthesis; L-proline biosynthesis; L-glutamate 5-semialdehyde from L-glutamate: step 2/2. In terms of biological role, catalyzes the NADPH-dependent reduction of L-glutamate 5-phosphate into L-glutamate 5-semialdehyde and phosphate. The product spontaneously undergoes cyclization to form 1-pyrroline-5-carboxylate. This is Gamma-glutamyl phosphate reductase from Thermodesulfovibrio yellowstonii (strain ATCC 51303 / DSM 11347 / YP87).